Here is a 412-residue protein sequence, read N- to C-terminus: DNA replication and repair protein RecF (412 aa).

Residue Gly-30–Thr-37 coordinates ATP.

Belongs to the RecF family.

Its subcellular location is the cytoplasm. The RecF protein is involved in DNA metabolism; it is required for DNA replication and normal SOS inducibility. RecF binds preferentially to single-stranded, linear DNA. It also seems to bind ATP. This is DNA replication and repair protein RecF from Bifidobacterium longum subsp. infantis (strain ATCC 15697 / DSM 20088 / JCM 1222 / NCTC 11817 / S12).